The sequence spans 69 residues: DNA-directed RNA polymerase subunit epsilon (69 aa).

It belongs to the RNA polymerase subunit epsilon family. In terms of assembly, RNAP is composed of a core of 2 alpha, a beta and a beta' subunit. The core is associated with a delta subunit, and at least one of epsilon or omega. When a sigma factor is associated with the core the holoenzyme is formed, which can initiate transcription.

It carries out the reaction RNA(n) + a ribonucleoside 5'-triphosphate = RNA(n+1) + diphosphate. Functionally, a non-essential component of RNA polymerase (RNAP). This Lysinibacillus sphaericus (strain C3-41) protein is DNA-directed RNA polymerase subunit epsilon.